The sequence spans 188 residues: GTPase KRas (188 aa).

GTP contacts are provided by residues 10-18 (GAGGVGKSA), 29-35 (VDEYDPT), 59-60 (AG), and 116-119 (NKYD). Residues 32-40 (YDPTIEDSY) carry the Effector region motif. The interval 167–188 (KEKMSKEGKKKKKKSKTKCILM) is disordered. Residue Cys185 is modified to Cysteine methyl ester. The S-farnesyl cysteine moiety is linked to residue Cys185. Residues 186–188 (ILM) constitute a propeptide, removed in mature form.

The protein belongs to the small GTPase superfamily. Ras family.

The protein resides in the cell membrane. It localises to the cytoplasm. It catalyses the reaction GTP + H2O = GDP + phosphate + H(+). Its activity is regulated as follows. Alternates between an inactive form bound to GDP and an active form bound to GTP. Activated by a guanine nucleotide-exchange factor (GEF) and inactivated by a GTPase-activating protein (GAP). Its function is as follows. Ras proteins bind GDP/GTP and possess intrinsic GTPase activity. Plays an important role in the regulation of cell proliferation. May play a role in promoting oncogenic events by inducing transcriptional silencing of tumor suppressor genes (TSGs). The polypeptide is GTPase KRas (kras) (Kryptolebias marmoratus (Mangrove killifish)).